The primary structure comprises 1427 residues: DNA-directed RNA polymerase subunit beta' (1427 aa).

Zn(2+) is bound by residues cysteine 66, cysteine 68, cysteine 81, and cysteine 84. Mg(2+) contacts are provided by aspartate 472, aspartate 474, and aspartate 476. Cysteine 815, cysteine 889, cysteine 896, and cysteine 899 together coordinate Zn(2+).

It belongs to the RNA polymerase beta' chain family. In terms of assembly, the RNAP catalytic core consists of 2 alpha, 1 beta, 1 beta' and 1 omega subunit. When a sigma factor is associated with the core the holoenzyme is formed, which can initiate transcription. Requires Mg(2+) as cofactor. The cofactor is Zn(2+).

The catalysed reaction is RNA(n) + a ribonucleoside 5'-triphosphate = RNA(n+1) + diphosphate. In terms of biological role, DNA-dependent RNA polymerase catalyzes the transcription of DNA into RNA using the four ribonucleoside triphosphates as substrates. The protein is DNA-directed RNA polymerase subunit beta' of Bacteroides fragilis (strain ATCC 25285 / DSM 2151 / CCUG 4856 / JCM 11019 / LMG 10263 / NCTC 9343 / Onslow / VPI 2553 / EN-2).